Reading from the N-terminus, the 593-residue chain is MLPAHKQTLEALLADSVAQVAHALKGADAEFVIPAITLERPKVAAHGDVACNVAMQLAKPLGTNPRQLAERIVAALVAQPAAQGLVDAAEIAGPGFINLRVSAAAKQAVIAAVFEQGRAFGTSQREKGKRVLVEFVSANPTGPLHVGHGRQAALGDVLANVIASQGYAVHREFYYNDAGVQIANLAISTQARARGLKPGDAGWPEAAYNGEYIADIARDYLNGATVAAKDGEPVTGARDIENLDAIRKFAVAYLRHEQDMDLQAFGVKFDQYYLESSLYSEGRVEKTVDALVKAGMTYEQDGALWLRTTDEGDDKDRVMRKSDGTYTYFVPDVAYHVTKWERGFTKVINIQGSDHHGTIARVRAGLQGLHIGIPKGYPDYVLHKMVTVMRDGQEVKLSKRAGSYVTVRDLIEWSGGAAPGQEAAPDMIDEATITRGRDAVRFFLISRKADTEFVFDIDLALKQNDENPVYYVQYAHARICSVLNELKARYNVDVAQLPGADLSQLTSPQAVSLMQKLAEYPDLLTHAANELAPHAVAFYLRDLAGEFHSFYNAERVLVDDEAPRNARAALLAATRQVLENGLAMLGVSAPAKM.

Positions 138–148 (ANPTGPLHVGH) match the 'HIGH' region motif.

The protein belongs to the class-I aminoacyl-tRNA synthetase family. In terms of assembly, monomer.

It is found in the cytoplasm. It carries out the reaction tRNA(Arg) + L-arginine + ATP = L-arginyl-tRNA(Arg) + AMP + diphosphate. This is Arginine--tRNA ligase from Burkholderia vietnamiensis (strain G4 / LMG 22486) (Burkholderia cepacia (strain R1808)).